A 189-amino-acid chain; its full sequence is MARPCAFLMVLVVLSYWSACSLGCDLPQTHNLRNKRALTLLEQMRRLSPLSCLKDRKDFGFPQEKVDAQQIKKAQAIPFVHELTQQILTLFTSNDSSAAWNATLLDSFCNDLHQQLNDLKACLMQQVGVQEFPLTQEDSLLAVRKYFHSITVYLREKKHSPCAWEVVRAEVQRTLSSSANLLARLSKEE.

The N-terminal stretch at 1–23 is a signal peptide; the sequence is MARPCAFLMVLVVLSYWSACSLG. 2 cysteine pairs are disulfide-bonded: C24–C122 and C52–C162. N94 and N101 each carry an N-linked (GlcNAc...) asparagine glycan.

The protein belongs to the alpha/beta interferon family.

The protein localises to the secreted. Exhibits antiviral activity against Theiler's virus, Mengo virus and vesicular stomatitis virus. Interferons alpha stimulate the production of two enzymes: a protein kinase and an oligoadenylate synthetase. The sequence is that of Interferon alpha-13 (Ifna13) from Mus musculus (Mouse).